The primary structure comprises 68 residues: Frenatin-3 (68 aa).

A signal peptide spans 1 to 22 (MHFLKKSIFLVLFLGLVSLSIC). A propeptide spanning residues 23 to 46 (EKEKREDQNEEEVDENEEESEEKR) is cleaved from the precursor. A disordered region spans residues 26 to 47 (KREDQNEEEVDENEEESEEKRG). The span at 30–42 (QNEEEVDENEEES) shows a compositional bias: acidic residues.

This sequence belongs to the frog skin active peptide (FSAP) family. Frenatin subfamily. Expressed by the granular skin glands.

The protein localises to the secreted. Functionally, antimicrobial peptide with activity against both Gram-positive and Gram-negative bacteria. Antibacterial activities have been tested against Bacillus cereus (MIC=12.5 ug/ml), Escherichia coli (MIC=50 ug/ml), Leuconostoc mesenteroides (MIC=25 ug/ml), Micrococcus luteus (MIC=1.5 ug/ml), Pastewella haemolytica (MIC=0.8 ug/ml), Staphylococcus aureus (MIC&lt;l00 ug/ml), Streptococcus faecalis (MIC&lt;150 ug/ml) and Streptococcus uberis (MIC=50 ug/ml). Strongly inhibits the formation of NO by neuronal nitric oxide synthase (nNOS) at micromolar concentrations. Acts by a non-competitive mechanism, probably by binding to calcium/calmodulin and as a consequence blocking calmodulin attachment to nNOS. The polypeptide is Frenatin-3 (Nyctimystes infrafrenatus (White-lipped tree frog)).